A 161-amino-acid polypeptide reads, in one-letter code: Nucleotide-binding protein RSc2549 (161 aa).

The protein belongs to the YajQ family.

Functionally, nucleotide-binding protein. The polypeptide is Nucleotide-binding protein RSc2549 (Ralstonia nicotianae (strain ATCC BAA-1114 / GMI1000) (Ralstonia solanacearum)).